The sequence spans 145 residues: Large-conductance mechanosensitive channel (145 aa).

The next 2 helical transmembrane spans lie at 30–50 (VAVV…AWLM) and 74–94 (GELV…FLII).

The protein belongs to the MscL family. As to quaternary structure, homopentamer.

The protein localises to the cell inner membrane. Its function is as follows. Channel that opens in response to stretch forces in the membrane lipid bilayer. May participate in the regulation of osmotic pressure changes within the cell. The polypeptide is Large-conductance mechanosensitive channel (Synechocystis sp. (strain ATCC 27184 / PCC 6803 / Kazusa)).